A 177-amino-acid polypeptide reads, in one-letter code: Large ribosomal subunit protein uL5m (177 aa).

Belongs to the universal ribosomal protein uL5 family.

Its subcellular location is the mitochondrion. The polypeptide is Large ribosomal subunit protein uL5m (RPL5) (Acanthamoeba castellanii (Amoeba)).